A 384-amino-acid chain; its full sequence is Histidinol-phosphate aminotransferase 1 (384 aa).

N6-(pyridoxal phosphate)lysine is present on K233.

The protein belongs to the class-II pyridoxal-phosphate-dependent aminotransferase family. Histidinol-phosphate aminotransferase subfamily. In terms of assembly, homodimer. Pyridoxal 5'-phosphate serves as cofactor.

It catalyses the reaction L-histidinol phosphate + 2-oxoglutarate = 3-(imidazol-4-yl)-2-oxopropyl phosphate + L-glutamate. Its pathway is amino-acid biosynthesis; L-histidine biosynthesis; L-histidine from 5-phospho-alpha-D-ribose 1-diphosphate: step 7/9. The sequence is that of Histidinol-phosphate aminotransferase 1 from Thiobacillus denitrificans (strain ATCC 25259 / T1).